Consider the following 403-residue polypeptide: Phosphoglycerate kinase (403 aa).

Residues 22-24 (DLN), Arg-37, 60-63 (HLGR), Arg-119, and Arg-156 contribute to the substrate site. ATP is bound by residues Lys-206, Gly-302, Glu-333, and 359-362 (GGDS).

The protein belongs to the phosphoglycerate kinase family. In terms of assembly, monomer.

The protein resides in the cytoplasm. The enzyme catalyses (2R)-3-phosphoglycerate + ATP = (2R)-3-phospho-glyceroyl phosphate + ADP. It participates in carbohydrate degradation; glycolysis; pyruvate from D-glyceraldehyde 3-phosphate: step 2/5. This Streptomyces coelicolor (strain ATCC BAA-471 / A3(2) / M145) protein is Phosphoglycerate kinase (pgk).